A 343-amino-acid polypeptide reads, in one-letter code: N-acetyl-gamma-glutamyl-phosphate reductase (343 aa).

The active site involves C147.

This sequence belongs to the NAGSA dehydrogenase family. Type 1 subfamily.

The protein resides in the cytoplasm. It carries out the reaction N-acetyl-L-glutamate 5-semialdehyde + phosphate + NADP(+) = N-acetyl-L-glutamyl 5-phosphate + NADPH + H(+). Its pathway is amino-acid biosynthesis; L-arginine biosynthesis; N(2)-acetyl-L-ornithine from L-glutamate: step 3/4. Its function is as follows. Catalyzes the NADPH-dependent reduction of N-acetyl-5-glutamyl phosphate to yield N-acetyl-L-glutamate 5-semialdehyde. The protein is N-acetyl-gamma-glutamyl-phosphate reductase of Listeria monocytogenes serotype 4b (strain CLIP80459).